The following is a 66-amino-acid chain: Large ribosomal subunit protein bL33c (66 aa).

The protein belongs to the bacterial ribosomal protein bL33 family.

The protein resides in the plastid. It is found in the chloroplast. The chain is Large ribosomal subunit protein bL33c from Illicium oligandrum (Star anise).